The primary structure comprises 195 residues: MQPNITGVILAGGRSSRMGGNDKGLIPLNGKPLFQYVIDRFKPQVSDLVINANRNQGLYKESGIPVIDDIITGFVGPLAGMHAGLSYASTEWVVFAPCDVPALPSDLVSQLWQGKKQALAAYANDDERAHPTFALMHISLKTQLADYLIRGDRKLMLFLDSINAQRVKFSGKADLFSNLNTPADCDLWEQKRRGQ.

GTP is bound by residues 10–12 (LAG), K23, N51, D69, and D99. D99 serves as a coordination point for Mg(2+).

It belongs to the MobA family. As to quaternary structure, monomer. The cofactor is Mg(2+).

The protein resides in the cytoplasm. The enzyme catalyses Mo-molybdopterin + GTP + H(+) = Mo-molybdopterin guanine dinucleotide + diphosphate. Its function is as follows. Transfers a GMP moiety from GTP to Mo-molybdopterin (Mo-MPT) cofactor (Moco or molybdenum cofactor) to form Mo-molybdopterin guanine dinucleotide (Mo-MGD) cofactor. This chain is Molybdenum cofactor guanylyltransferase, found in Yersinia pestis bv. Antiqua (strain Antiqua).